The following is a 160-amino-acid chain: Cytochrome b6-f complex subunit 4 (160 aa).

3 helical membrane passes run 36-56 (LLYI…GLAV), 95-115 (LLGI…PFIE), and 128-148 (IAMA…IGAC).

The protein belongs to the cytochrome b family. PetD subfamily. The 4 large subunits of the cytochrome b6-f complex are cytochrome b6, subunit IV (17 kDa polypeptide, PetD), cytochrome f and the Rieske protein, while the 4 small subunits are PetG, PetL, PetM and PetN. The complex functions as a dimer.

It localises to the cellular thylakoid membrane. In terms of biological role, component of the cytochrome b6-f complex, which mediates electron transfer between photosystem II (PSII) and photosystem I (PSI), cyclic electron flow around PSI, and state transitions. The polypeptide is Cytochrome b6-f complex subunit 4 (Prochlorococcus marinus (strain MIT 9313)).